A 379-amino-acid chain; its full sequence is Succinyl-diaminopimelate desuccinylase (379 aa).

His70 contacts Zn(2+). Asp72 is a catalytic residue. Asp103 is a binding site for Zn(2+). The Proton acceptor role is filled by Glu137. Zn(2+)-binding residues include Glu138, Glu166, and His352.

This sequence belongs to the peptidase M20A family. DapE subfamily. In terms of assembly, homodimer. The cofactor is Zn(2+). Requires Co(2+) as cofactor.

The enzyme catalyses N-succinyl-(2S,6S)-2,6-diaminopimelate + H2O = (2S,6S)-2,6-diaminopimelate + succinate. The protein operates within amino-acid biosynthesis; L-lysine biosynthesis via DAP pathway; LL-2,6-diaminopimelate from (S)-tetrahydrodipicolinate (succinylase route): step 3/3. Catalyzes the hydrolysis of N-succinyl-L,L-diaminopimelic acid (SDAP), forming succinate and LL-2,6-diaminopimelate (DAP), an intermediate involved in the bacterial biosynthesis of lysine and meso-diaminopimelic acid, an essential component of bacterial cell walls. The sequence is that of Succinyl-diaminopimelate desuccinylase from Burkholderia orbicola (strain MC0-3).